The primary structure comprises 177 residues: Shikimate kinase (177 aa).

17–22 serves as a coordination point for ATP; that stretch reads GVGKTT. Thr21 contributes to the Mg(2+) binding site. Positions 39, 63, and 86 each coordinate substrate. Arg125 is a binding site for ATP. Arg143 contacts substrate. Arg159 is an ATP binding site.

The protein belongs to the shikimate kinase family. As to quaternary structure, monomer. It depends on Mg(2+) as a cofactor.

The protein localises to the cytoplasm. The enzyme catalyses shikimate + ATP = 3-phosphoshikimate + ADP + H(+). Its pathway is metabolic intermediate biosynthesis; chorismate biosynthesis; chorismate from D-erythrose 4-phosphate and phosphoenolpyruvate: step 5/7. Catalyzes the specific phosphorylation of the 3-hydroxyl group of shikimic acid using ATP as a cosubstrate. This chain is Shikimate kinase, found in Bacillus licheniformis (strain ATCC 14580 / DSM 13 / JCM 2505 / CCUG 7422 / NBRC 12200 / NCIMB 9375 / NCTC 10341 / NRRL NRS-1264 / Gibson 46).